The primary structure comprises 316 residues: Probable prolyl 4-hydroxylase 7 (316 aa).

Topologically, residues 1–4 (MDSR) are cytoplasmic. Residues 5 to 24 (IFLAFSLCFLFTLPLISSAP) form a helical; Signal-anchor for type II membrane protein membrane-spanning segment. Over 25–316 (NRFLTRSSNT…CRKSCKACSS (292 aa)) the chain is Lumenal. Asn-96 carries N-linked (GlcNAc...) asparagine glycosylation. In terms of domain architecture, Fe2OG dioxygenase spans 139–261 (NGESMQILHY…KWSATRWIHV (123 aa)). His-157 and Asp-159 together coordinate Fe cation. N-linked (GlcNAc...) asparagine glycosylation occurs at Asn-233. His-242 provides a ligand contact to Fe cation. Position 252 (Lys-252) interacts with 2-oxoglutarate. Residues 274–314 (CMDENVSCEKWAKAGECQKNPTYMVGSDKDHGYCRKSCKAC) form the ShKT domain. 3 disulfides stabilise this stretch: Cys-274-Cys-314, Cys-281-Cys-307, and Cys-290-Cys-311. N-linked (GlcNAc...) asparagine glycosylation occurs at Asn-278.

The protein belongs to the P4HA family. It depends on Fe(2+) as a cofactor. Requires L-ascorbate as cofactor.

It localises to the endoplasmic reticulum membrane. The enzyme catalyses L-prolyl-[collagen] + 2-oxoglutarate + O2 = trans-4-hydroxy-L-prolyl-[collagen] + succinate + CO2. Catalyzes the post-translational formation of 4-hydroxyproline in -Xaa-Pro-Gly- sequences in proline-rich peptide sequences of plant glycoproteins and other proteins. Hydroxyprolines are important constituent of many plant cell wall glycoproteins such as extensins, hydroxyproline-rich glycoproteins, lectins and arabinogalactan proteins. The polypeptide is Probable prolyl 4-hydroxylase 7 (Arabidopsis thaliana (Mouse-ear cress)).